A 239-amino-acid polypeptide reads, in one-letter code: tRNA (guanine-N(7)-)-methyltransferase (239 aa).

S-adenosyl-L-methionine is bound by residues glutamate 69, glutamate 94, aspartate 121, and aspartate 144. Aspartate 144 is a catalytic residue. Lysine 148 contributes to the substrate binding site. The segment at arginine 150 to arginine 155 is interaction with RNA. Residues aspartate 180 and threonine 217–glutamate 220 contribute to the substrate site.

Belongs to the class I-like SAM-binding methyltransferase superfamily. TrmB family. In terms of assembly, monomer.

The catalysed reaction is guanosine(46) in tRNA + S-adenosyl-L-methionine = N(7)-methylguanosine(46) in tRNA + S-adenosyl-L-homocysteine. Its pathway is tRNA modification; N(7)-methylguanine-tRNA biosynthesis. Catalyzes the formation of N(7)-methylguanine at position 46 (m7G46) in tRNA. This Salmonella typhi protein is tRNA (guanine-N(7)-)-methyltransferase.